Consider the following 210-residue polypeptide: Ribosomal RNA large subunit methyltransferase E (210 aa).

Residues Gly61, Trp63, Asp81, Asp97, and Asp122 each coordinate S-adenosyl-L-methionine. The active-site Proton acceptor is the Lys162.

It belongs to the class I-like SAM-binding methyltransferase superfamily. RNA methyltransferase RlmE family.

It localises to the cytoplasm. It catalyses the reaction uridine(2552) in 23S rRNA + S-adenosyl-L-methionine = 2'-O-methyluridine(2552) in 23S rRNA + S-adenosyl-L-homocysteine + H(+). In terms of biological role, specifically methylates the uridine in position 2552 of 23S rRNA at the 2'-O position of the ribose in the fully assembled 50S ribosomal subunit. The sequence is that of Ribosomal RNA large subunit methyltransferase E from Xanthomonas axonopodis pv. citri (strain 306).